The following is a 62-amino-acid chain: Sperm histone (62 aa).

The segment at 1 to 62 is disordered; the sequence is MARYRRSRTR…GSRRRRRRRY (62 aa). Thr-9 carries the post-translational modification Phosphothreonine.

The protein belongs to the protamine P1 family. Testis.

It is found in the nucleus. It localises to the chromosome. Its function is as follows. Protamines substitute for histones in the chromatin of sperm during the haploid phase of spermatogenesis. They compact sperm DNA into a highly condensed, stable and inactive complex. The polypeptide is Sperm histone (Gallus gallus (Chicken)).